Reading from the N-terminus, the 1112-residue chain is Mediator of RNA polymerase II transcription subunit 14 (1112 aa).

Disordered stretches follow at residues 1–76 (MPGV…INES), 120–141 (SPHG…QSPE), and 1088–1112 (TNSA…ITID). Polar residues predominate over residues 20–39 (SPDNVSSTPFPQERVNQSGD). Positions 64–73 (IETHTGKDGI) are enriched in basic and acidic residues. A compositionally biased stretch (polar residues) spans 1088 to 1099 (TNSAGARSSQQC).

The protein belongs to the Mediator complex subunit 14 family. In terms of assembly, component of the Mediator complex.

The protein resides in the nucleus. In terms of biological role, component of the Mediator complex, a coactivator involved in the regulated transcription of nearly all RNA polymerase II-dependent genes. Mediator functions as a bridge to convey information from gene-specific regulatory proteins to the basal RNA polymerase II transcription machinery. Mediator is recruited to promoters by direct interactions with regulatory proteins and serves as a scaffold for the assembly of a functional preinitiation complex with RNA polymerase II and the general transcription factors. The chain is Mediator of RNA polymerase II transcription subunit 14 (rgr1) from Aspergillus clavatus (strain ATCC 1007 / CBS 513.65 / DSM 816 / NCTC 3887 / NRRL 1 / QM 1276 / 107).